The following is a 253-amino-acid chain: Triosephosphate isomerase (253 aa).

Residue 9-11 (NWK) coordinates substrate. Residue His94 is the Electrophile of the active site. Residue Glu163 is the Proton acceptor of the active site. Residues Gly169, Ser209, and 230-231 (GG) contribute to the substrate site.

It belongs to the triosephosphate isomerase family. As to quaternary structure, homodimer.

The protein localises to the cytoplasm. It carries out the reaction D-glyceraldehyde 3-phosphate = dihydroxyacetone phosphate. It functions in the pathway carbohydrate biosynthesis; gluconeogenesis. It participates in carbohydrate degradation; glycolysis; D-glyceraldehyde 3-phosphate from glycerone phosphate: step 1/1. Its function is as follows. Involved in the gluconeogenesis. Catalyzes stereospecifically the conversion of dihydroxyacetone phosphate (DHAP) to D-glyceraldehyde-3-phosphate (G3P). The chain is Triosephosphate isomerase from Dehalococcoides mccartyi (strain ATCC BAA-2100 / JCM 16839 / KCTC 5957 / BAV1).